A 428-amino-acid polypeptide reads, in one-letter code: Cyclic AMP-responsive element-binding protein 3-like protein 3-B (428 aa).

The Cytoplasmic segment spans residues 1 to 286 (MDHYSDQGGD…VMNGSNKPVQ (286 aa)). A compositionally biased stretch (low complexity) spans 67-83 (VSGSPVWSPSPSDSGIS). The segment at 67 to 104 (VSGSPVWSPSPSDSGISEDPHSDHIDSPPPNASPPMEP) is disordered. Over residues 93 to 103 (SPPPNASPPME) the composition is skewed to pro residues. A bZIP domain is found at 210-273 (ILKKIRRKIR…ISLMEQLRRL (64 aa)). The tract at residues 212-241 (KKIRRKIRNKQSAQESRKKKKEYIDGLESR) is basic motif. The tract at residues 252–273 (LQRKVFQLEKCNISLMEQLRRL) is leucine-zipper. Residues 287–303 (AGTCVLVLLLSFTLILL) traverse the membrane as a helical; Signal-anchor for type II membrane protein segment. The Lumenal segment spans residues 304–428 (PNLKPFTDTK…SRRSPHADDM (125 aa)). A disordered region spans residues 381 to 428 (TEYDPESHNHSFDQHDEHHHGDPITGHVATVTLNPRRGSRRSPHADDM). The span at 385–402 (PESHNHSFDQHDEHHHGD) shows a compositional bias: basic and acidic residues. N-linked (GlcNAc...) asparagine glycosylation is present at asparagine 389.

It belongs to the bZIP family. ATF subfamily. As to quaternary structure, binds DNA as a dimer. Post-translationally, controlled by regulated intramembrane proteolysis (RIP). A fragment containing the cytoplasmic transcription factor domain is released by proteolysis. The cleavage seems to be performed sequentially by site-1 and site-2 proteases.

It localises to the endoplasmic reticulum membrane. The protein resides in the nucleus. Functionally, transcriptional activator. Binds the cAMP response element (CRE). Activates transcription through box-B element and CRE. Seems to function synergistically with atf6. Regulates FGF21 transcription. This Danio rerio (Zebrafish) protein is Cyclic AMP-responsive element-binding protein 3-like protein 3-B (creb3l3b).